A 214-amino-acid chain; its full sequence is Phosphatidylserine decarboxylase proenzyme (214 aa).

Ser183 (schiff-base intermediate with substrate; via pyruvic acid) is an active-site residue. Ser183 carries the pyruvic acid (Ser); by autocatalysis modification.

Belongs to the phosphatidylserine decarboxylase family. PSD-A subfamily. As to quaternary structure, heterodimer of a large membrane-associated beta subunit and a small pyruvoyl-containing alpha subunit. Pyruvate serves as cofactor. Post-translationally, is synthesized initially as an inactive proenzyme. Formation of the active enzyme involves a self-maturation process in which the active site pyruvoyl group is generated from an internal serine residue via an autocatalytic post-translational modification. Two non-identical subunits are generated from the proenzyme in this reaction, and the pyruvate is formed at the N-terminus of the alpha chain, which is derived from the carboxyl end of the proenzyme. The post-translation cleavage follows an unusual pathway, termed non-hydrolytic serinolysis, in which the side chain hydroxyl group of the serine supplies its oxygen atom to form the C-terminus of the beta chain, while the remainder of the serine residue undergoes an oxidative deamination to produce ammonia and the pyruvoyl prosthetic group on the alpha chain.

It localises to the cell membrane. It carries out the reaction a 1,2-diacyl-sn-glycero-3-phospho-L-serine + H(+) = a 1,2-diacyl-sn-glycero-3-phosphoethanolamine + CO2. The protein operates within phospholipid metabolism; phosphatidylethanolamine biosynthesis; phosphatidylethanolamine from CDP-diacylglycerol: step 2/2. Its function is as follows. Catalyzes the formation of phosphatidylethanolamine (PtdEtn) from phosphatidylserine (PtdSer). This chain is Phosphatidylserine decarboxylase proenzyme, found in Syntrophotalea carbinolica (strain DSM 2380 / NBRC 103641 / GraBd1) (Pelobacter carbinolicus).